The sequence spans 66 residues: Large ribosomal subunit protein bL31 (66 aa).

Positions 16, 18, 36, and 39 each coordinate Zn(2+).

Belongs to the bacterial ribosomal protein bL31 family. Type A subfamily. In terms of assembly, part of the 50S ribosomal subunit. Requires Zn(2+) as cofactor.

In terms of biological role, binds the 23S rRNA. The chain is Large ribosomal subunit protein bL31 from Sulfurimonas denitrificans (strain ATCC 33889 / DSM 1251) (Thiomicrospira denitrificans (strain ATCC 33889 / DSM 1251)).